The chain runs to 507 residues: Efflux pump ustT (507 aa).

The next 11 membrane-spanning stretches (helical) occupy residues 59–79, 146–166, 180–200, 216–236, 240–260, 316–336, 359–379, 398–418, 421–441, 449–469, and 481–501; these read IAVVASLTFLITDIAGQIIVA, LLIAMVGCLLSDIWVGVVTWF, IWQLIGGGGASISSMAFAMIA, HAAVLVAELVSVPAGAALANF, IPVFGAAIFMVLGILFAYVVV, VLLIMASFFVCQLGRMISGIT, AGVNLFVLAAIIPALSYILVK, VCLIIGSFVMFLAASPGTLVF, TVFALGFAFSVTARSFLTGMV, VFTGVTTMLYGGLVIGSPMLA, and IWVGLPFLLAAVLFTLALGAI.

It belongs to the major facilitator superfamily.

It localises to the cell membrane. The protein operates within mycotoxin biosynthesis. Its function is as follows. Efflux pump; part of the gene cluster that mediates the biosynthesis of the secondary metabolite ustiloxin B, an antimitotic tetrapeptide. Probably involved in self-resistance through the export of ustiloxin B. The chain is Efflux pump ustT from Aspergillus flavus (strain ATCC 200026 / FGSC A1120 / IAM 13836 / NRRL 3357 / JCM 12722 / SRRC 167).